A 195-amino-acid chain; its full sequence is HTH-type transcriptional regulator BetI (195 aa).

The HTH tetR-type domain occupies 8–68 (PIRRQQLIEA…ATMRYLISHL (61 aa)). The segment at residues 31–50 (SIVQIARRAGVSNGIISHYF) is a DNA-binding region (H-T-H motif).

It functions in the pathway amine and polyamine biosynthesis; betaine biosynthesis via choline pathway [regulation]. Its function is as follows. Repressor involved in the biosynthesis of the osmoprotectant glycine betaine. It represses transcription of the choline transporter BetT and the genes of BetAB involved in the synthesis of glycine betaine. This Pectobacterium carotovorum subsp. carotovorum (strain PC1) protein is HTH-type transcriptional regulator BetI.